We begin with the raw amino-acid sequence, 277 residues long: Tryptophan synthase alpha chain (277 aa).

Catalysis depends on proton acceptor residues Glu-51 and Glu-62.

The protein belongs to the TrpA family. In terms of assembly, tetramer of two alpha and two beta chains.

It catalyses the reaction (1S,2R)-1-C-(indol-3-yl)glycerol 3-phosphate + L-serine = D-glyceraldehyde 3-phosphate + L-tryptophan + H2O. It participates in amino-acid biosynthesis; L-tryptophan biosynthesis; L-tryptophan from chorismate: step 5/5. In terms of biological role, the alpha subunit is responsible for the aldol cleavage of indoleglycerol phosphate to indole and glyceraldehyde 3-phosphate. This is Tryptophan synthase alpha chain from Phenylobacterium zucineum (strain HLK1).